The chain runs to 87 residues: Small ribosomal subunit protein bS20 (87 aa).

Belongs to the bacterial ribosomal protein bS20 family.

Functionally, binds directly to 16S ribosomal RNA. This chain is Small ribosomal subunit protein bS20, found in Rickettsia bellii (strain OSU 85-389).